A 239-amino-acid chain; its full sequence is MNIHLDKYGQGMPLVLFHGWGFDSQIWQPIIPYLKPKYQIILVDLPGFGLTPMMDWESFKKNLLDQLPDKFALAGWSMGGLYATRLAIEEPARVQYLINITSSPRFISDVDWPGVAEEVFVNFYNNLSKDINKTLKEFISLQLNKMKFDFKIGNPPSPEGLAFGLEILGTWDFREQLKQISIPTVYLFGRLDPITPAKTMAIMEKNYPNFKYVLFNRAAHMPFLSHTDLFITMMDEFIK.

Residues Trp20, 77 to 78 (SM), and 138 to 142 (FISLQ) each bind substrate. Ser77 acts as the Nucleophile in catalysis. Catalysis depends on residues Asp192 and His220. His220 is a binding site for substrate.

It belongs to the AB hydrolase superfamily. Carboxylesterase BioH family. As to quaternary structure, monomer.

The protein resides in the cytoplasm. The enzyme catalyses 6-carboxyhexanoyl-[ACP] methyl ester + H2O = 6-carboxyhexanoyl-[ACP] + methanol + H(+). The protein operates within cofactor biosynthesis; biotin biosynthesis. In terms of biological role, the physiological role of BioH is to remove the methyl group introduced by BioC when the pimeloyl moiety is complete. It allows to synthesize pimeloyl-ACP via the fatty acid synthetic pathway through the hydrolysis of the ester bonds of pimeloyl-ACP esters. The polypeptide is Pimeloyl-[acyl-carrier protein] methyl ester esterase (Legionella pneumophila (strain Corby)).